The chain runs to 552 residues: Two-component response regulator ARR10 (552 aa).

Positions 18–133 (RVLAVDDDQT…ELKNIWQHVV (116 aa)) constitute a Response regulatory domain. The residue at position 69 (D69) is a 4-aspartylphosphate. The tract at residues 139–181 (KKNKSNVSNGSGNCDKANRKRKEQYEEEEEEERGNDNDDPTAQ) is disordered. The stretch at 151 to 173 (NCDKANRKRKEQYEEEEEEERGN) forms a coiled coil. Positions 163–177 (YEEEEEEERGNDNDD) are enriched in acidic residues. The Nuclear localization signal signature appears at 182–185 (KKPR). The segment at residues 185–235 (RVLWTHELHNKFLAAVDHLGVERAVPKKILDLMNVDKLTRENVASHLQKFR) is a DNA-binding region (myb-like GARP).

This sequence belongs to the ARR family. Type-B subfamily. In terms of assembly, binds the target DNA as a monomer. Post-translationally, two-component system major event consists of a His-to-Asp phosphorelay between a sensor histidine kinase (HK) and a response regulator (RR). In plants, the His-to-Asp phosphorelay involves an additional intermediate named Histidine-containing phosphotransfer protein (HPt). This multistep phosphorelay consists of a His-Asp-His-Asp sequential transfer of a phosphate group between first a His and an Asp of the HK protein, followed by the transfer to a conserved His of the HPt protein and finally the transfer to an Asp in the receiver domain of the RR protein. In terms of tissue distribution, detected in the whole plant. Predominantly expressed in roots and leaves.

The protein resides in the nucleus. Transcriptional activator that binds specifically to the DNA sequence 5'-[AG]GATT-3'. Functions as a response regulator involved in His-to-Asp phosphorelay signal transduction system. Phosphorylation of the Asp residue in the receiver domain activates the ability of the protein to promote the transcription of target genes. Could directly activate some type-A response regulators in response to cytokinins. The sequence is that of Two-component response regulator ARR10 (ARR10) from Arabidopsis thaliana (Mouse-ear cress).